A 1314-amino-acid polypeptide reads, in one-letter code: E3 ubiquitin-protein ligase RNF123 (1314 aa).

An N-acetylalanine modification is found at A2. The B30.2/SPRY domain occupies 74–254 (VDSEDEESQG…VAFNFGSRPL (181 aa)). A disordered region spans residues 460–481 (HRSSREGKDSAEDRAEAAEERP). Residues 462 to 481 (SSREGKDSAEDRAEAAEERP) show a composition bias toward basic and acidic residues. S675 is subject to Phosphoserine. R683 is modified (asymmetric dimethylarginine). The tract at residues 968-974 (WILVRLW) is interaction with NFKB1. 8 residues coordinate Zn(2+): C1254, C1257, C1269, H1271, C1274, C1277, C1288, and C1291. An RING-type zinc finger spans residues 1254-1292 (CPICYAHPISAVFQPCGHKSCKACIDQHLMNNKDCFFCK).

In terms of assembly, component of the KPC complex composed of RNF123/KPC1 and UBAC1/KPC2. Interacts with UBAC1 and CDKN1B via its N-terminal domain. Interacts with RIGI (via N-terminus) and IFIH1 (via N-terminus). Post-translationally, ubiquitinated, leading to its degradation. Deubiquitinated by USP19, thereby stimulating CDKN1B ubiquitin-dependent degradation.

It localises to the cytoplasm. The catalysed reaction is S-ubiquitinyl-[E2 ubiquitin-conjugating enzyme]-L-cysteine + [acceptor protein]-L-lysine = [E2 ubiquitin-conjugating enzyme]-L-cysteine + N(6)-ubiquitinyl-[acceptor protein]-L-lysine.. The protein operates within protein modification; protein ubiquitination. Catalytic subunit of the KPC complex that acts as E3 ubiquitin-protein ligase. Promotes the ubiquitination and proteasome-mediated degradation of CDKN1B which is the cyclin-dependent kinase inhibitor at the G0-G1 transition of the cell cycle. Also acts as a key regulator of the NF-kappa-B signaling by promoting maturation of the NFKB1 component of NF-kappa-B. Acts by catalyzing ubiquitination of the NFKB1 p105 precursor, leading to limited proteasomal degradation of NFKB1 p105 and generation of the active NFKB1 p50 subunit. Functions also as an inhibitor of innate antiviral signaling mediated by RIGI and IFIH1 independently of its E3 ligase activity. Interacts with the N-terminal CARD domains of RIGI and IFIH1 and competes with the downstream adapter MAVS. This is E3 ubiquitin-protein ligase RNF123 from Oryctolagus cuniculus (Rabbit).